Here is a 994-residue protein sequence, read N- to C-terminus: Leucine-rich repeat receptor-like kinase protein FLORAL ORGAN NUMBER1 (994 aa).

A signal peptide spans 1–17 (MPPTLLLLLLLLPPSLA). LRR repeat units lie at residues 73-93 (AINL…IALL), 94-117 (DSLA…LPTL), 118-141 (PSLR…DSGG), 147-171 (FPSL…SASH), 172-194 (ARLR…SYGD), 195-219 (LAAL…LSRL), 244-268 (LGAL…LGRL), 269-292 (QRLD…LGDL), 293-316 (SSLA…LANL), 318-340 (NLKL…VAGF), 341-364 (AQLE…LGKN), 365-388 (GRLK…LCAG), 390-412 (RLEM…LGDC), 413-436 (KTLT…LFNL), 438-459 (QANM…VIGG), 460-483 (DKIG…IGNL), 484-507 (PALQ…IGNL), 509-531 (NLSR…LIRC), 533-555 (SLAA…ITSL), 556-579 (KILC…MSNM), and 581-604 (SLTT…QFLV). N-linked (GlcNAc...) asparagine glycans are attached at residues asparagine 75, asparagine 98, asparagine 124, asparagine 129, and asparagine 159. The N-linked (GlcNAc...) asparagine glycan is linked to asparagine 256. Asparagine 315 is a glycosylation site (N-linked (GlcNAc...) asparagine). A glycan (N-linked (GlcNAc...) asparagine) is linked at asparagine 352. Residues asparagine 495, asparagine 509, and asparagine 514 are each glycosylated (N-linked (GlcNAc...) asparagine). N-linked (GlcNAc...) asparagine glycans are attached at residues asparagine 562 and asparagine 578. Residue asparagine 606 is glycosylated (N-linked (GlcNAc...) asparagine). A helical transmembrane segment spans residues 647-667 (KKMLVALVAAFAAVAVAFLGA). The Protein kinase domain maps to 704 to 978 (VKEDNIIGKG…TMREVVHMLS (275 aa)). ATP is bound by residues 710-718 (IGKGGAGIV) and lysine 731. The active-site Proton acceptor is aspartate 828.

Belongs to the protein kinase superfamily. Ser/Thr protein kinase family. In terms of tissue distribution, expressed in shoot apical meristem, and after transition to the reproductive phase, detected in the inflorescence and the floral meristems. Expressed uniformly throughout the meristems. Expressed also in floral organ primordia, such as the palea, lemma, lodicules, stamens, carpels and ovules.

The protein resides in the membrane. The catalysed reaction is L-seryl-[protein] + ATP = O-phospho-L-seryl-[protein] + ADP + H(+). The enzyme catalyses L-threonyl-[protein] + ATP = O-phospho-L-threonyl-[protein] + ADP + H(+). Receptor-like kinase protein that regulates the size of the floral meristem. The chain is Leucine-rich repeat receptor-like kinase protein FLORAL ORGAN NUMBER1 (FON1) from Oryza sativa subsp. japonica (Rice).